A 269-amino-acid chain; its full sequence is Oligoribonuclease, mitochondrial (269 aa).

Positions Leu55 to Leu227 constitute an Exonuclease domain. Tyr184 is an active-site residue. The interval Glu240–Phe269 is disordered. Over residues Glu245–Ser261 the composition is skewed to low complexity.

This sequence belongs to the oligoribonuclease family.

It localises to the mitochondrion. Its function is as follows. 3'-to-5' exoribonuclease specific for small oligoribonucleotides. This Saccharomyces cerevisiae (strain ATCC 204508 / S288c) (Baker's yeast) protein is Oligoribonuclease, mitochondrial (REX2).